Here is a 247-residue protein sequence, read N- to C-terminus: MRKVFETVVGLNPNFSFRGKQQTRIETFSDAVFALAITLLVLSSTIPETFEDLWASMRDVIPFAICVALIIVIWYQHYIFFLKYGLQDKVTILLNTILLFVLLVYVYPLKFLARFLSEIYGGIFGIIETDLSRFGEYSHQNLKLLMVNYGLGAFAIFLVFSLMYWRAYKMKSLLDLNSYEIFDTKSSIIANLLMCSVPLLSLIITLIDPWGNFRTTILSGFLYFLYVPIMIVFGRITSKKSRRLLQD.

Helical transmembrane passes span 23–44 (TRIE…VLSS), 56–78 (SMRD…YQHY), 89–117 (KVTI…RFLS), 142–165 (LKLL…LMYW), 187–210 (SIIA…IDPW), and 215–237 (TTIL…GRIT). The short motif at 24 to 30 (RIETFSD) is the RxxxFSD motif element.

It belongs to the TMEM175 family. In terms of assembly, homotetramer.

The protein localises to the cell membrane. It carries out the reaction K(+)(in) = K(+)(out). Potassium channel; forms a potassium-permeable leak-like channel with weak selectivity for potassium. The channel is permeable for K(+), Rb(+) and Cs(+). This is Potassium channel Ftrac_2467 from Marivirga tractuosa (strain ATCC 23168 / DSM 4126 / NBRC 15989 / NCIMB 1408 / VKM B-1430 / H-43) (Microscilla tractuosa).